The chain runs to 152 residues: 6,7-dimethyl-8-ribityllumazine synthase (152 aa).

5-amino-6-(D-ribitylamino)uracil-binding positions include Phe-21, 55-57 (AFE), and 79-81 (CVI). Position 84–85 (84–85 (AT)) interacts with (2S)-2-hydroxy-3-oxobutyl phosphate. His-87 functions as the Proton donor in the catalytic mechanism. Phe-112 contributes to the 5-amino-6-(D-ribitylamino)uracil binding site. Residue Arg-126 participates in (2S)-2-hydroxy-3-oxobutyl phosphate binding.

The protein belongs to the DMRL synthase family. As to quaternary structure, forms an icosahedral capsid composed of 60 subunits, arranged as a dodecamer of pentamers.

It catalyses the reaction (2S)-2-hydroxy-3-oxobutyl phosphate + 5-amino-6-(D-ribitylamino)uracil = 6,7-dimethyl-8-(1-D-ribityl)lumazine + phosphate + 2 H2O + H(+). The protein operates within cofactor biosynthesis; riboflavin biosynthesis; riboflavin from 2-hydroxy-3-oxobutyl phosphate and 5-amino-6-(D-ribitylamino)uracil: step 1/2. Its function is as follows. Catalyzes the formation of 6,7-dimethyl-8-ribityllumazine by condensation of 5-amino-6-(D-ribitylamino)uracil with 3,4-dihydroxy-2-butanone 4-phosphate. This is the penultimate step in the biosynthesis of riboflavin. This chain is 6,7-dimethyl-8-ribityllumazine synthase, found in Staphylococcus carnosus (strain TM300).